Reading from the N-terminus, the 231-residue chain is Cytidylate kinase (231 aa).

16-24 (GPAASGKST) lines the ATP pocket. Residues 176–205 (PDLDSLEQEITKRDRDDAEREHAPLKKHPE) are disordered. Residues 184-205 (EITKRDRDDAEREHAPLKKHPE) show a composition bias toward basic and acidic residues.

Belongs to the cytidylate kinase family. Type 1 subfamily.

The protein resides in the cytoplasm. The enzyme catalyses CMP + ATP = CDP + ADP. It carries out the reaction dCMP + ATP = dCDP + ADP. This Pelodictyon phaeoclathratiforme (strain DSM 5477 / BU-1) protein is Cytidylate kinase.